Consider the following 159-residue polypeptide: 2-C-methyl-D-erythritol 2,4-cyclodiphosphate synthase (159 aa).

Asp-8 and His-10 together coordinate a divalent metal cation. Residues 8-10 (DVH) and 34-35 (HS) contribute to the 4-CDP-2-C-methyl-D-erythritol 2-phosphate site. His-42 contributes to the a divalent metal cation binding site. Residues 56 to 58 (DIG), 61 to 65 (FPDTD), 100 to 106 (AQAPKML), 132 to 135 (TTTE), Phe-139, and Arg-142 each bind 4-CDP-2-C-methyl-D-erythritol 2-phosphate.

Belongs to the IspF family. In terms of assembly, homotrimer. A divalent metal cation serves as cofactor.

The catalysed reaction is 4-CDP-2-C-methyl-D-erythritol 2-phosphate = 2-C-methyl-D-erythritol 2,4-cyclic diphosphate + CMP. It participates in isoprenoid biosynthesis; isopentenyl diphosphate biosynthesis via DXP pathway; isopentenyl diphosphate from 1-deoxy-D-xylulose 5-phosphate: step 4/6. Functionally, involved in the biosynthesis of isopentenyl diphosphate (IPP) and dimethylallyl diphosphate (DMAPP), two major building blocks of isoprenoid compounds. Catalyzes the conversion of 4-diphosphocytidyl-2-C-methyl-D-erythritol 2-phosphate (CDP-ME2P) to 2-C-methyl-D-erythritol 2,4-cyclodiphosphate (ME-CPP) with a corresponding release of cytidine 5-monophosphate (CMP). This chain is 2-C-methyl-D-erythritol 2,4-cyclodiphosphate synthase, found in Klebsiella pneumoniae subsp. pneumoniae (strain ATCC 700721 / MGH 78578).